The following is a 106-amino-acid chain: NADH dehydrogenase [ubiquinone] iron-sulfur protein 5 (106 aa).

The region spanning 30 to 74 (APRCHAFEKEWIECAHGIGAIRAEKECKIEYDDFIECLLRQKTMR) is the CHCH domain. 2 consecutive short sequence motifs (cx9C motif) follow at residues 33 to 43 (CHAFEKEWIEC) and 56 to 66 (CKIEYDDFIEC). 2 disulfides stabilise this stretch: C33–C66 and C43–C56. Residues 87–106 (IKEGKYTPPPHHIGKGEPRP) are disordered.

Belongs to the complex I NDUFS5 subunit family. In terms of assembly, mammalian complex I is composed of 45 different subunits. This is a component of the iron-sulfur (IP) fragment of the enzyme.

It localises to the mitochondrion inner membrane. The protein localises to the mitochondrion intermembrane space. Accessory subunit of the mitochondrial membrane respiratory chain NADH dehydrogenase (Complex I), that is believed not to be involved in catalysis. Complex I functions in the transfer of electrons from NADH to the respiratory chain. The immediate electron acceptor for the enzyme is believed to be ubiquinone. The protein is NADH dehydrogenase [ubiquinone] iron-sulfur protein 5 (NDUFS5) of Macaca fascicularis (Crab-eating macaque).